A 93-amino-acid polypeptide reads, in one-letter code: Small ribosomal subunit protein uS19c (93 aa).

It belongs to the universal ribosomal protein uS19 family.

It is found in the plastid. The protein resides in the chloroplast. Its function is as follows. Protein S19 forms a complex with S13 that binds strongly to the 16S ribosomal RNA. The sequence is that of Small ribosomal subunit protein uS19c from Lolium perenne (Perennial ryegrass).